A 200-amino-acid chain; its full sequence is Nucleoside triphosphate pyrophosphatase (200 aa).

Aspartate 75 acts as the Proton acceptor in catalysis.

Belongs to the Maf family. Requires a divalent metal cation as cofactor.

It is found in the cytoplasm. It catalyses the reaction a ribonucleoside 5'-triphosphate + H2O = a ribonucleoside 5'-phosphate + diphosphate + H(+). The catalysed reaction is a 2'-deoxyribonucleoside 5'-triphosphate + H2O = a 2'-deoxyribonucleoside 5'-phosphate + diphosphate + H(+). Its function is as follows. Nucleoside triphosphate pyrophosphatase. May have a dual role in cell division arrest and in preventing the incorporation of modified nucleotides into cellular nucleic acids. This Synechococcus sp. (strain CC9311) protein is Nucleoside triphosphate pyrophosphatase.